We begin with the raw amino-acid sequence, 103 residues long: Large ribosomal subunit protein bL21 (103 aa).

The protein belongs to the bacterial ribosomal protein bL21 family. Part of the 50S ribosomal subunit. Contacts protein L20.

Functionally, this protein binds to 23S rRNA in the presence of protein L20. The sequence is that of Large ribosomal subunit protein bL21 from Escherichia coli O127:H6 (strain E2348/69 / EPEC).